We begin with the raw amino-acid sequence, 178 residues long: Nucleoside-triphosphatase THEP1 (178 aa).

Residues 9 to 16 (GPVGSIKA) and 101 to 108 (VIIIDEVG) each bind ATP.

This sequence belongs to the THEP1 NTPase family.

The catalysed reaction is a ribonucleoside 5'-triphosphate + H2O = a ribonucleoside 5'-diphosphate + phosphate + H(+). Its function is as follows. Has nucleotide phosphatase activity towards ATP, GTP, CTP, TTP and UTP. May hydrolyze nucleoside diphosphates with lower efficiency. The polypeptide is Nucleoside-triphosphatase THEP1 (Thermoplasma volcanium (strain ATCC 51530 / DSM 4299 / JCM 9571 / NBRC 15438 / GSS1)).